A 439-amino-acid polypeptide reads, in one-letter code: MDDKTKNDQQESNEDKDELELFTRNTSKKRRQRKRSKATHFSNQNKDDTSQQADFDEEIYLINKDFKKEESNDKNNDSASSHANDNNIDDSTDSNIENEDYRYNQEIDDQNESNVISVDNEQPQSAPKEQNSDSIDEETVTKKERKSKVTQLKPLTLEEKRKLRRKRQKRIQYSVITILVLLIAVILIYMFSPLSKIAHVNINGNNHVSTSKINKVLGVKNDSRMYTFSKKNAINDLEENPLIKSVEIHKQLPNTLNVDITENEIIALVKYKGKYLPLLENGKLLKGSNDVKINDAPVMDGFKGTKEDDMIKALSEMTPEVRRYIAEVTYAPSKNKQSRIELFTTDGLQVIGDISTISKKMKYYPQMSQSLSRDSSGKLKTRGYIDLSVGASFIPYRGNTSSQSESDKNVTKSSQEENQAKEELQSVLNKINKQSSKNN.

Disordered stretches follow at residues 1 to 96 (MDDK…DSNI) and 119 to 149 (DNEQ…KSKV). Residues 1–173 (MDDKTKNDQQ…RRKRQKRIQY (173 aa)) are Cytoplasmic-facing. The span at 11 to 20 (ESNEDKDELE) shows a compositional bias: acidic residues. Basic residues predominate over residues 26–38 (TSKKRRQRKRSKA). Residues 64–76 (KDFKKEESNDKNN) show a composition bias toward basic and acidic residues. Residues 77-86 (DSASSHANDN) show a composition bias toward low complexity. The span at 87–96 (NIDDSTDSNI) shows a compositional bias: acidic residues. Residues 119-133 (DNEQPQSAPKEQNSD) show a composition bias toward polar residues. A helical transmembrane segment spans residues 174–194 (SVITILVLLIAVILIYMFSPL). Positions 195–263 (SKIAHVNING…NTLNVDITEN (69 aa)) constitute a POTRA domain. Over 195-439 (SKIAHVNING…KINKQSSKNN (245 aa)) the chain is Extracellular. A disordered region spans residues 396-439 (YRGNTSSQSESDKNVTKSSQEENQAKEELQSVLNKINKQSSKNN). Positions 405-424 (ESDKNVTKSSQEENQAKEEL) are enriched in basic and acidic residues. The span at 426 to 439 (SVLNKINKQSSKNN) shows a compositional bias: polar residues.

This sequence belongs to the FtsQ/DivIB family. DivIB subfamily.

The protein localises to the cell membrane. Cell division protein that may be involved in stabilizing or promoting the assembly of the division complex. This chain is Cell division protein DivIB, found in Staphylococcus aureus (strain NCTC 8325 / PS 47).